Here is a 146-residue protein sequence, read N- to C-terminus: Hemoglobin subunit beta (146 aa).

Residues H2–H146 enclose the Globin domain. The heme b site is built by H63 and H92.

Belongs to the globin family. As to quaternary structure, heterotetramer of two alpha chains and two beta chains. In terms of tissue distribution, red blood cells.

Involved in oxygen transport from the lung to the various peripheral tissues. The sequence is that of Hemoglobin subunit beta (HBB) from Aptenodytes forsteri (Emperor penguin).